The chain runs to 344 residues: Anthranilate phosphoribosyltransferase (344 aa).

5-phospho-alpha-D-ribose 1-diphosphate contacts are provided by residues Gly80, 83-84, Thr88, 90-93, 108-116, and Ser120; these read GD, NIST, and KHGNRSISS. Position 80 (Gly80) interacts with anthranilate. Ser92 serves as a coordination point for Mg(2+). Anthranilate is bound at residue Asn111. Arg166 is an anthranilate binding site. Positions 229 and 230 each coordinate Mg(2+).

The protein belongs to the anthranilate phosphoribosyltransferase family. As to quaternary structure, homodimer. Mg(2+) serves as cofactor.

The catalysed reaction is N-(5-phospho-beta-D-ribosyl)anthranilate + diphosphate = 5-phospho-alpha-D-ribose 1-diphosphate + anthranilate. The protein operates within amino-acid biosynthesis; L-tryptophan biosynthesis; L-tryptophan from chorismate: step 2/5. Its function is as follows. Catalyzes the transfer of the phosphoribosyl group of 5-phosphorylribose-1-pyrophosphate (PRPP) to anthranilate to yield N-(5'-phosphoribosyl)-anthranilate (PRA). This is Anthranilate phosphoribosyltransferase from Chloroherpeton thalassium (strain ATCC 35110 / GB-78).